A 339-amino-acid polypeptide reads, in one-letter code: Phosphate acyltransferase (339 aa).

It belongs to the PlsX family. In terms of assembly, homodimer. Probably interacts with PlsY.

The protein localises to the cytoplasm. It carries out the reaction a fatty acyl-[ACP] + phosphate = an acyl phosphate + holo-[ACP]. The protein operates within lipid metabolism; phospholipid metabolism. Its function is as follows. Catalyzes the reversible formation of acyl-phosphate (acyl-PO(4)) from acyl-[acyl-carrier-protein] (acyl-ACP). This enzyme utilizes acyl-ACP as fatty acyl donor, but not acyl-CoA. This is Phosphate acyltransferase from Ruthia magnifica subsp. Calyptogena magnifica.